Reading from the N-terminus, the 227-residue chain is Cytochrome c oxidase subunit 2 (227 aa).

The Mitochondrial intermembrane portion of the chain corresponds to 1–14 (MAYPFQLGLQDATS). Residues 15–45 (PIMEELTNFHDHTLMIVFLISSLVLYIISLM) traverse the membrane as a helical segment. Topologically, residues 46–59 (LTTKLTHTSTMDAQ) are mitochondrial matrix. The helical transmembrane segment at 60–87 (EVETIWTILPAVILILIALPSLRILYMM) threads the bilayer. Over 88 to 227 (DEINNPALTV…YFENWSASMI (140 aa)) the chain is Mitochondrial intermembrane. His-161, Cys-196, Glu-198, Cys-200, His-204, and Met-207 together coordinate Cu cation. Glu-198 is a binding site for Mg(2+). Phosphotyrosine is present on Tyr-218.

This sequence belongs to the cytochrome c oxidase subunit 2 family. In terms of assembly, component of the cytochrome c oxidase (complex IV, CIV), a multisubunit enzyme composed of 14 subunits. The complex is composed of a catalytic core of 3 subunits MT-CO1, MT-CO2 and MT-CO3, encoded in the mitochondrial DNA, and 11 supernumerary subunits COX4I, COX5A, COX5B, COX6A, COX6B, COX6C, COX7A, COX7B, COX7C, COX8 and NDUFA4, which are encoded in the nuclear genome. The complex exists as a monomer or a dimer and forms supercomplexes (SCs) in the inner mitochondrial membrane with NADH-ubiquinone oxidoreductase (complex I, CI) and ubiquinol-cytochrome c oxidoreductase (cytochrome b-c1 complex, complex III, CIII), resulting in different assemblies (supercomplex SCI(1)III(2)IV(1) and megacomplex MCI(2)III(2)IV(2)). Found in a complex with TMEM177, COA6, COX18, COX20, SCO1 and SCO2. Interacts with TMEM177 in a COX20-dependent manner. Interacts with COX20. Interacts with COX16. Cu cation is required as a cofactor.

It is found in the mitochondrion inner membrane. It carries out the reaction 4 Fe(II)-[cytochrome c] + O2 + 8 H(+)(in) = 4 Fe(III)-[cytochrome c] + 2 H2O + 4 H(+)(out). Its function is as follows. Component of the cytochrome c oxidase, the last enzyme in the mitochondrial electron transport chain which drives oxidative phosphorylation. The respiratory chain contains 3 multisubunit complexes succinate dehydrogenase (complex II, CII), ubiquinol-cytochrome c oxidoreductase (cytochrome b-c1 complex, complex III, CIII) and cytochrome c oxidase (complex IV, CIV), that cooperate to transfer electrons derived from NADH and succinate to molecular oxygen, creating an electrochemical gradient over the inner membrane that drives transmembrane transport and the ATP synthase. Cytochrome c oxidase is the component of the respiratory chain that catalyzes the reduction of oxygen to water. Electrons originating from reduced cytochrome c in the intermembrane space (IMS) are transferred via the dinuclear copper A center (CU(A)) of subunit 2 and heme A of subunit 1 to the active site in subunit 1, a binuclear center (BNC) formed by heme A3 and copper B (CU(B)). The BNC reduces molecular oxygen to 2 water molecules using 4 electrons from cytochrome c in the IMS and 4 protons from the mitochondrial matrix. The sequence is that of Cytochrome c oxidase subunit 2 (MT-CO2) from Oenomys hypoxanthus (Rufous-nosed rat).